Consider the following 315-residue polypeptide: 4-diphosphocytidyl-2-C-methyl-D-erythritol kinase (315 aa).

Residue Lys-26 is part of the active site. Residue 111 to 121 (PLAGGLAGGSA) coordinates ATP. Asp-153 is a catalytic residue.

Belongs to the GHMP kinase family. IspE subfamily.

It carries out the reaction 4-CDP-2-C-methyl-D-erythritol + ATP = 4-CDP-2-C-methyl-D-erythritol 2-phosphate + ADP + H(+). It functions in the pathway isoprenoid biosynthesis; isopentenyl diphosphate biosynthesis via DXP pathway; isopentenyl diphosphate from 1-deoxy-D-xylulose 5-phosphate: step 3/6. Functionally, catalyzes the phosphorylation of the position 2 hydroxy group of 4-diphosphocytidyl-2C-methyl-D-erythritol. The polypeptide is 4-diphosphocytidyl-2-C-methyl-D-erythritol kinase (Salinispora arenicola (strain CNS-205)).